The chain runs to 279 residues: BEN domain-containing protein 6 (279 aa).

Polar residues predominate over residues 1–15 (MQKIVQTDEITNTQA). 2 disordered regions span residues 1–65 (MQKI…LAEL) and 134–172 (RATNNSSPDSFASTCSNSNSNSSSPVSLKPEEEHQTDEK). Residues 62-99 (LAELSKEELCAKIKSLKEKLTNTRKENSRLRQSLVMLQ) adopt a coiled-coil conformation. Residues 134–148 (RATNNSSPDSFASTC) show a composition bias toward polar residues. The segment covering 162 to 172 (KPEEEHQTDEK) has biased composition (basic and acidic residues). The BEN domain occupies 171-271 (EKQFQIEKWQ…NCTKKPNLSK (101 aa)).

As to quaternary structure, interacts (via BEN domain) with RBPJ.

It localises to the nucleus. Acts as a corepressor of recombining binding protein suppressor hairless (RBPJ) and inhibits Notch signaling in neural stem cells, thereby opposing their self-renewal and promoting neurogenesis. The protein is BEN domain-containing protein 6 (BEND6) of Homo sapiens (Human).